Reading from the N-terminus, the 951-residue chain is Coiled-coil domain-containing protein 15 (951 aa).

Coiled-coil stretches lie at residues 64–89 (LIEE…QVKY), 154–193 (DGIE…VIKK), 782–813 (MDIE…EQEC), and 839–874 (LAQL…IQEK).

Interacts with POC5, POC1B, CETN2 and FAM161A.

It localises to the cytoplasm. The protein localises to the cytoskeleton. Its subcellular location is the microtubule organizing center. The protein resides in the centrosome. It is found in the centriole. It localises to the centriolar satellite. Functionally, plays an important role in primary cilium assembly, maintenance, and length regulation. Interacts with centriole inner scaffold proteins to promote proper centriole size and integrity and assembly of functional cilia. Required for the recruitment of both the inner scaffold protein POC1B and the distal SFI1/CETN2 complex to centrioles. The protein is Coiled-coil domain-containing protein 15 (CCDC15) of Homo sapiens (Human).